Consider the following 93-residue polypeptide: Cobalt transport protein CbiN (93 aa).

2 consecutive transmembrane segments (helical) span residues 5-25 (LMLL…NHGG) and 63-83 (LLFT…LGYC).

The protein belongs to the CbiN family. In terms of assembly, forms an energy-coupling factor (ECF) transporter complex composed of an ATP-binding protein (A component, CbiO), a transmembrane protein (T component, CbiQ) and 2 possible substrate-capture proteins (S components, CbiM and CbiN) of unknown stoichimetry.

It is found in the cell inner membrane. It participates in cofactor biosynthesis; adenosylcobalamin biosynthesis. Functionally, part of the energy-coupling factor (ECF) transporter complex CbiMNOQ involved in cobalt import. In Salmonella newport (strain SL254), this protein is Cobalt transport protein CbiN.